The sequence spans 595 residues: Adenine deaminase 3 (595 aa).

This sequence belongs to the metallo-dependent hydrolases superfamily. Adenine deaminase family. Mn(2+) is required as a cofactor.

It catalyses the reaction adenine + H2O + H(+) = hypoxanthine + NH4(+). The protein is Adenine deaminase 3 of Rhizobium meliloti (strain 1021) (Ensifer meliloti).